The following is a 529-amino-acid chain: MPTDCISYQTSGYFSKLIQDYLDQKSELKTLYNHFPTLENFEKQIAEKASNFDNHNRIALVNTLKKQYQNIEISDSTKQNIELLALENTFTITTGHQLNLFSGPLYFLYKIISTINLTKELKSKYPSYNFVPVYWMATEDHDFEEINYFNFKGKKFRWNKESNGPVGRLSTEGLAEFLDIYSLELGSSTNANTLKKLFEDTYLKHDNLADATRFLANSLFANYGLVIIDADDADLKRAFIPYAKEELEKQTSYKAVQETIEQLKEYTVQVNPREINLFYIEDNLRERIIFEEDKYFVNNTKISFSKDQILSELENHPEKFSPNVIMRPLYQEIILPNLCYIGGGGEIAYWLELKSFFDAVNITFPMILVRNSVLLATEKQAKKADQLNLSWKDLFTKQENLVNAITHKISAFPIDLTPQKEILKTQFQYLYELAAQTDKSFSGAVKAQEVKQTKGLENLEKRLLKAQKRNLSDQLQRVIDLQCELFPNNSLQERQSNFSEFYLEKGEQLVPLLLQKLKPLEMNFNIITI.

The stretch at 450–485 (VKQTKGLENLEKRLLKAQKRNLSDQLQRVIDLQCEL) forms a coiled coil.

Belongs to the BshC family.

In Flavobacterium johnsoniae (strain ATCC 17061 / DSM 2064 / JCM 8514 / BCRC 14874 / CCUG 350202 / NBRC 14942 / NCIMB 11054 / UW101) (Cytophaga johnsonae), this protein is Putative cysteine ligase BshC.